The chain runs to 142 residues: Probable transport accessory protein MmpS5 (142 aa).

A helical membrane pass occupies residues 7–26; sequence RAWIPLLILVVVAIAGFTVQ.

The protein belongs to the MmpS family.

The protein localises to the cell membrane. This is Probable transport accessory protein MmpS5 (mmpS5) from Mycobacterium bovis (strain ATCC BAA-935 / AF2122/97).